Reading from the N-terminus, the 152-residue chain is MDKKCQLCQSNVEIGLETNGKFWCKFIGPNKFFICLEGEFEILCDYIVAQTGIICLDCIKNYDYVPYKSVSCDLCLKNFHSIVPGSTCQGHRCSSEVFSDHIEGYYGSYKYDKDIINFVSKRPNNIKIGHNICDGCIDNLINTGICQTSSNN.

This is an uncharacterized protein from Acanthamoeba polyphaga (Amoeba).